The chain runs to 308 residues: Ribosomal RNA small subunit methyltransferase H (308 aa).

S-adenosyl-L-methionine is bound by residues 34-36 (GGH), D54, F85, D99, and Q106.

Belongs to the methyltransferase superfamily. RsmH family.

The protein localises to the cytoplasm. The enzyme catalyses cytidine(1402) in 16S rRNA + S-adenosyl-L-methionine = N(4)-methylcytidine(1402) in 16S rRNA + S-adenosyl-L-homocysteine + H(+). Functionally, specifically methylates the N4 position of cytidine in position 1402 (C1402) of 16S rRNA. This chain is Ribosomal RNA small subunit methyltransferase H, found in Dichelobacter nodosus (strain VCS1703A).